Here is a 236-residue protein sequence, read N- to C-terminus: Probable pseudouridine-5'-phosphatase YKL033W-A (236 aa).

This sequence belongs to the HAD-like hydrolase superfamily.

It carries out the reaction XMP + H2O = xanthosine + phosphate. The catalysed reaction is psi-UMP + H2O = pseudouridine + phosphate. Its function is as follows. Nucleotidase with XMP as the best in vitro substrate. Low catalytic efficiencies of YKL033W-A observed with XMP and other substrates suggest that these could be secondary activities for this protein, and its primary substrate is not yet identified. May possess pseudouridine 5'-phosphatase activity and together with dTTP/UTP pyrophosphatase YOR111W might constitute a pathway for the detoxification of pseudouridine 5'-triphosphate (Psi-UTP) and -monophosphate (Psi-UMP). In Saccharomyces cerevisiae (strain ATCC 204508 / S288c) (Baker's yeast), this protein is Probable pseudouridine-5'-phosphatase YKL033W-A.